Here is a 1102-residue protein sequence, read N- to C-terminus: Voltage-gated delayed rectifier potassium channel KCNH8 (1102 aa).

Residues 1–225 (MPVMKGLLAP…HFSTFKAGWD (225 aa)) lie on the Cytoplasmic side of the membrane. The PAS domain occupies 18–90 (IATRFDGTHS…LQIEKSLEEK (73 aa)). In terms of domain architecture, PAC spans 93–145 (FKGEIMFYKKNGAPFWCLLDIVPIKNEKGDVVLFLASFKDITDTKVKITSEDK). The chain crosses the membrane as a helical span at residues 226–246 (WLILLATFYVAVTVPYNVCFI). The Extracellular portion of the chain corresponds to 247-255 (GNEDLSTTR). A helical transmembrane segment spans residues 256–276 (STTVSDIAVEILFIIDIILNF). Over 277 to 298 (RTTYVSKSGQVIFEARSICIHY) the chain is Cytoplasmic. The chain crosses the membrane as a helical span at residues 299–319 (VTTWFIIDLIAALPFDLLYAF). Residue Asn320 is glycosylated (N-linked (GlcNAc...) asparagine). Residues 320–327 (NVTVVSLV) are Extracellular-facing. A helical; Voltage-sensor membrane pass occupies residues 328 to 348 (HLLKTVRLLRLLRLLQKLDRY). The Cytoplasmic segment spans residues 349–353 (SQHST). Residues 354–374 (IVLTLLMSMFALLAHWMACIW) traverse the membrane as a helical segment. At 375-419 (YVIGKMEREDNSLLKWEVGWLHELGKRLESPYYGNNTLGGPSIRS) the chain is on the extracellular side. N-linked (GlcNAc...) asparagine glycosylation occurs at Asn409. The pore-forming intramembrane region spans 420 to 440 (AYIAALYFTLSSLTSVGFGNV). The Selectivity filter signature appears at 434–439 (SVGFGN). Residues 441–448 (SANTDAEK) lie on the Extracellular side of the membrane. The chain crosses the membrane as a helical span at residues 449–469 (IFSICTMLIGALMHALVFGNV). The Cytoplasmic portion of the chain corresponds to 470–1102 (TAIIQRMYSR…DVKDSKAINV (633 aa)). The segment at 551–668 (LFECASRGCL…HKFVEDIQHD (118 aa)) is cNMP-binding domain. Disordered stretches follow at residues 683–744 (SRLS…KTGS), 762–793 (PFHSPIRVSSANSPKTKQEADPPNHGTRKEKN), 818–845 (EDGNSSEETQTFDFGSEQIRPEPRISPS), and 960–983 (LVGSNPQRTEAHEQSPVDSELHHS). Residues 710-723 (VEDEEEEEVEEEET) show a composition bias toward acidic residues. Positions 777–793 (TKQEADPPNHGTRKEKN) are enriched in basic and acidic residues. Positions 968–982 (TEAHEQSPVDSELHH) are enriched in basic and acidic residues.

It belongs to the potassium channel family. H (Eag) (TC 1.A.1.20) subfamily. Kv12.1/KCNH8 sub-subfamily. In terms of assembly, the potassium channel is probably composed of a homo- or heterotetrameric complex of pore-forming alpha subunits that can associate with modulating beta subunits. As to expression, detected in superior cervical, mesenteric and coeliac ganglia. Expressed in brain (piriform cortex, olfactory tubercle, cerebral cortex, hippocampus pyramidial cells and dentate gyrus and basal ganglia of caudate/putamen and accumbens nucleus). Expressed in pituitary.

It is found in the membrane. The catalysed reaction is K(+)(in) = K(+)(out). Its function is as follows. Pore-forming (alpha) subunit of a voltage-gated delayed rectifier potassium channel that mediates outward-rectifying potassium currents. Elicits a slowly activating, non-inactivating and slowly deactivation outwards potassium current at depolarizating voltages from -30 mV to +50mV. Shows no obvious change in the activation rate from different holding potentials. Activation is strongly dependent on the pH of the external solution. The protein is Voltage-gated delayed rectifier potassium channel KCNH8 of Rattus norvegicus (Rat).